Consider the following 105-residue polypeptide: Oxytocin-neurophysin 1 (105 aa).

C1 and C6 are joined by a disulfide. The residue at position 9 (G9) is a Glycine amide. Intrachain disulfides connect C22-C66, C25-C39, C33-C56, C40-C46, C73-C85, C79-C97, and C86-C91.

Belongs to the vasopressin/oxytocin family. As to quaternary structure, interacts with oxytocin receptor (Ki=1.5 nM). Interacts with vasopressin V1aR/AVPR1A (Ki=37 nM), V1bR/AVPR1B (Ki=222 nM), and V2R/AVPR2 receptors (Ki=823 nM).

The protein resides in the secreted. Neurophysin 1 specifically binds oxytocin. In terms of biological role, oxytocin causes contraction of the smooth muscle of the uterus and of the mammary gland. Acts by binding to oxytocin receptor (OXTR). This chain is Oxytocin-neurophysin 1 (OXT), found in Equus caballus (Horse).